A 146-amino-acid chain; its full sequence is Stress-responsive DNAJB4-interacting membrane protein 1 (146 aa).

Residues 1 to 26 (MWPAPCSVGRLLIFFMCSSSGYVVQG) form the signal peptide. At 27–66 (CGPSPGARTTLGSPLSLWSIKTPSHIFCTRRAINLGFPSP) the chain is on the extracellular side. Residues 67–87 (PLVQLIFWSLNAGLDLYLCLI) form a helical membrane-spanning segment. Residues 88–94 (SSCGFSQ) are Cytoplasmic-facing. The chain crosses the membrane as a helical span at residues 95 to 115 (VFWPVEAFCSFSLSFFALALS). The Extracellular segment spans residues 116–146 (HKFVICRLDQHIFSGFTKSLKNLPPCHRTDI).

In terms of assembly, homodimer. Interacts with DNAJB4. Expressed in brain with higher detection in neurons than astrocytes. Decreased expression in Alzheimer brains. Detected at protein level in brain and cervix.

It localises to the membrane. Functionally, promotes neuronal cells survival to stress conditions. This is Stress-responsive DNAJB4-interacting membrane protein 1 (SDIM1) from Homo sapiens (Human).